The primary structure comprises 708 residues: E3 ubiquitin-protein ligase RNF169 (708 aa).

2 stretches are compositionally biased toward low complexity: residues 1 to 20 and 33 to 53; these read MAAAGPSTRASSAAAAAALS and AAKTGAPGPASGPSLLVLSPP. Disordered regions lie at residues 1–71, 96–169, and 195–262; these read MAAA…CAGC, ADAA…EPDF, and EEKL…MTQT. Ser-12 is subject to Phosphoserine. The RING-type zinc finger occupies 68-107; sequence CAGCLEPPGEAAALPCGHSLCRGCAQRAADAAGPGCPRCR. Over residues 132–147 the composition is skewed to basic and acidic residues; that stretch reads CARRSQPERCRPRRDG. Low complexity predominate over residues 148-167; it reads GAAAAGPRPEQEPRAAPAEP. Positions 195-243 are enriched in basic and acidic residues; that stretch reads EEKLQEEKPSEDQIHKLLPEDTETGKRKMDEQKKRDEPLVLKTNLERCP. Positions 205 to 213 match the UMI motif motif; sequence EDQIHKLLP. A phosphoserine mark is found at Ser-247 and Ser-249. A Glycyl lysine isopeptide (Lys-Gly) (interchain with G-Cter in SUMO2) cross-link involves residue Lys-286. At Ser-339 the chain carries Phosphoserine. A Glycyl lysine isopeptide (Lys-Gly) (interchain with G-Cter in SUMO2) cross-link involves residue Lys-362. A phosphoserine mark is found at Ser-368, Ser-403, and Ser-409. Phosphothreonine is present on Thr-410. Ser-485 carries the phosphoserine modification. Residues 491-555 are disordered; the sequence is SEYTGPTSAD…EQFEGLGSTP (65 aa). A Glycyl lysine isopeptide (Lys-Gly) (interchain with G-Cter in SUMO2) cross-link involves residue Lys-511. Thr-554 is modified (phosphothreonine). At Ser-644 the chain carries Phosphoserine. The short motif at 665 to 682 is the MIU motif element; the sequence is QEEEDRQLALQLQRMFDN. Residues 689–701 carry the LR motif motif; it reads RRKGSVDQYLLRS. At Ser-693 the chain carries Phosphoserine.

The protein belongs to the RNF169 family. In terms of assembly, interacts with DYRK1B. Post-translationally, phosphorylated by DYRK1A; phosphorylation increases RNF169 ability to block accumulation of TP53BP1 at the DSB sites.

Its subcellular location is the chromosome. It is found in the nucleus. The protein localises to the nucleoplasm. The enzyme catalyses S-ubiquitinyl-[E2 ubiquitin-conjugating enzyme]-L-cysteine + [acceptor protein]-L-lysine = [E2 ubiquitin-conjugating enzyme]-L-cysteine + N(6)-ubiquitinyl-[acceptor protein]-L-lysine.. It participates in protein modification; protein ubiquitination. In terms of biological role, probable E3 ubiquitin-protein ligase that acts as a regulator of double-strand breaks (DSBs) repair following DNA damage. Functions in a non-canonical fashion to harness RNF168-mediated protein recruitment to DSB-containing chromatin, thereby contributing to regulation of DSB repair pathway utilization. Once recruited to DSB repair sites by recognizing and binding ubiquitin catalyzed by RNF168, competes with TP53BP1 and BRCA1 for association with RNF168-modified chromatin, thereby favouring homologous recombination repair (HRR) and single-strand annealing (SSA) instead of non-homologous end joining (NHEJ) mediated by TP53BP1. E3 ubiquitin-protein ligase activity is not required for regulation of DSBs repair. This chain is E3 ubiquitin-protein ligase RNF169 (RNF169), found in Homo sapiens (Human).